We begin with the raw amino-acid sequence, 139 residues long: MSINIRIVTPTGFLWETKAEEILLPSTTAPLIVLPGHINILTGLSPGLLRVKVDSRWKPILISSGAAQILTSDSTNVDVGIMEVEEIKQENFKEAELLLEKANDALNIINPIDIRERIKAGEAKSFAESRVEAFKFLAT.

Belongs to the ATPase epsilon chain family. F-type ATPases have 2 components, CF(1) - the catalytic core - and CF(0) - the membrane proton channel. CF(1) has five subunits: alpha(3), beta(3), gamma(1), delta(1), epsilon(1). CF(0) has three main subunits: a, b and c.

Its subcellular location is the plastid. It is found in the chloroplast thylakoid membrane. Its function is as follows. Produces ATP from ADP in the presence of a proton gradient across the membrane. The polypeptide is ATP synthase epsilon chain, chloroplastic (Dictyota dichotoma).